Reading from the N-terminus, the 233-residue chain is MQKPIIEFRNVSKKFGNKLPINNVSFTVKKNNITTLIGPNGAGKTTIVRLMLGLEKPTSGEIIIDPKLKIGYVPQKFGLTPDLPITVKNFLELLAPSNFNNNIKEINSFIDLEHIKDQEISKLSGGQFQKVVLACSIVNNPDLIILDEPLQSLDVTSQQEFYQLINLIRKKLNITVFMISHDLFTVIKNSDQVICLNGHICCSGIPNEITPNSEFSNALSALGFYTHHHDHKH.

Positions 6–222 (IEFRNVSKKF…SEFSNALSAL (217 aa)) constitute an ABC transporter domain. 38–45 (GPNGAGKT) contacts ATP.

The protein belongs to the ABC transporter superfamily. Zinc importer (TC 3.A.1.15.5) family. The complex is composed of two ATP-binding proteins (ZnuC), two transmembrane proteins (ZnuB) and a solute-binding protein (ZnuA).

It is found in the cell inner membrane. The enzyme catalyses Zn(2+)(out) + ATP(in) + H2O(in) = Zn(2+)(in) + ADP(in) + phosphate(in) + H(+)(in). Part of the ABC transporter complex ZnuABC involved in zinc import. Responsible for energy coupling to the transport system. The polypeptide is Zinc import ATP-binding protein ZnuC (Rickettsia conorii (strain ATCC VR-613 / Malish 7)).